The chain runs to 500 residues: Na(+)/H(+) antiporter NhaB (500 aa).

Transmembrane regions (helical) follow at residues 11-31 (HGFLGQSPLWYKAVICLFLVL), 34-54 (LLLATIGPAAAGWALVIEFIF), 58-78 (MALKCYPLMPGGLLLIEALLL), 96-116 (VILLLMFMVAGIHFMKELLLF), 121-141 (ILLGVRSKAMLSLLFCVLSAF), 145-165 (FLDALTVTAVIISAAVGFYAV), 205-225 (LLMHGAVGTALGGVCTLVGEP), 241-261 (FLLKVAPVSIPVLGAGLLTCV), 311-331 (ILIICLGLHVAEVGLIGLMVI), 350-370 (FQDAMPFTSLLVVFFAVVAVI), 394-414 (MLYLANGLLSAISDNVFVATI), 450-470 (ATPNGQAAFLFLLTSAIAPLI), and 477-497 (MVWMALPYTVVMGGLGWWAVT).

The protein belongs to the NhaB Na(+)/H(+) (TC 2.A.34) antiporter family.

The protein resides in the cell inner membrane. The enzyme catalyses 2 Na(+)(in) + 3 H(+)(out) = 2 Na(+)(out) + 3 H(+)(in). Na(+)/H(+) antiporter that extrudes sodium in exchange for external protons. This chain is Na(+)/H(+) antiporter NhaB, found in Pseudomonas putida (strain ATCC 700007 / DSM 6899 / JCM 31910 / BCRC 17059 / LMG 24140 / F1).